We begin with the raw amino-acid sequence, 157 residues long: Phospholipase A2 phaiodactylipin (157 aa).

Residues Trp34 and Gly36 each coordinate Ca(2+). 5 disulfides stabilise this stretch: Cys35–Cys56, Cys55–Cys94, Cys62–Cys87, Cys85–Cys127, and Cys132–Cys143. The N-linked (GlcNAc...) asparagine glycan is linked to Asn43. His59 is a catalytic residue. Residue Asp60 coordinates Ca(2+). Asp88 is a catalytic residue. An N-linked (GlcNAc...) asparagine glycan is attached at Asn101. Positions 134–139 (DEKSAR) are cleaved as a propeptide — removed in mature form. The N-linked (GlcNAc...) asparagine glycan is linked to Asn153.

It belongs to the phospholipase A2 family. Group III subfamily. As to quaternary structure, heterodimer composed of a small subunit and a large subunit; disulfide-linked. Ca(2+) is required as a cofactor. In terms of tissue distribution, expressed by the venom gland.

It localises to the secreted. The enzyme catalyses a 1,2-diacyl-sn-glycero-3-phosphocholine + H2O = a 1-acyl-sn-glycero-3-phosphocholine + a fatty acid + H(+). Its function is as follows. Scorpion venom phospholipase A2 (PLA2) that is lethal to crickets and crustaceae. Causes inflammation in mice and lysis of human erythrocytes. Has a mild anticoagulant effect on human platelets. PLA2 catalyzes the calcium-dependent hydrolysis of the 2-acyl groups in 3-sn-phosphoglycerides. This is Phospholipase A2 phaiodactylipin from Anuroctonus phaiodactylus (Mafia scorpion).